The chain runs to 78 residues: MNAPDKLPPETRQPVSGYLWGALAVLTCPCHLPILAAVLAGTTAGAFLGEHWGVAALALTGLFVLAVTRLLRAFRGGS.

2 helical membrane passes run 19 to 39 (LWGA…AAVL) and 47 to 67 (FLGE…VLAV).

The protein resides in the cell inner membrane. Broad mercury transporter that mediates the transport of both CH(3)Hg(I) and Hg(II) across the membrane. The sequence is that of Broad mercury transporter MerE from Shigella flexneri.